A 568-amino-acid chain; its full sequence is MNTTYDYIIVGAGSAGCVLADRLSASGEHYILLLEAGGSDRSIFIQMPTALSYPMNSEKYAWQFETQPEAGLDSRSLHCPRGRVLGGSSSINGMVYVRGHACDYDEWVEQGAEGWSYQECLPYFRRAESWIHGEDTYRGGDGPVGTCNGNDMELNPLYQAFIDAGQQAGYPKTDDYNGYQQEGFGPMHMTVDKGIRASTSNAYLRRAMKRSNLTVRKGVVTRKVLIKNKQAIGVEIEVGGKVQSVYANTEVLLSAGSVGSPQLLQLSGIGPKAVLEQAGIAVKHDLPGVGENLQDHLEVYFQYACHQPITLNSKLGLISKGLIGTRWILQKDGLGATNHFESCAFIRSRAGLKWPNIQYHFLPAAMRYDGQAAFDGHGFQVHVGPNKPQSRGRIWITSADPHQKPNIEFNYISTEQDKQDWRDCIRLTREILAQPAMDDYRGEEIQPGADITSDEAMDAWVRQNVESAYHPSCTCKMGSDNDPMTVLNKDCQVRGIDSLRVIDSSVFPTIPNGNLNAPTIMVAEKAADAILGNTPLSPSNAPTWIAPQWETEQRNGAAQRPMFHQQRK.

D6–E35 is a binding site for FAD. H470 (proton acceptor) is an active-site residue.

This sequence belongs to the GMC oxidoreductase family. FAD is required as a cofactor.

It catalyses the reaction choline + A = betaine aldehyde + AH2. The catalysed reaction is betaine aldehyde + NAD(+) + H2O = glycine betaine + NADH + 2 H(+). It participates in amine and polyamine biosynthesis; betaine biosynthesis via choline pathway; betaine aldehyde from choline (cytochrome c reductase route): step 1/1. In terms of biological role, involved in the biosynthesis of the osmoprotectant glycine betaine. Catalyzes the oxidation of choline to betaine aldehyde and betaine aldehyde to glycine betaine at the same rate. The protein is Oxygen-dependent choline dehydrogenase of Photobacterium profundum (strain SS9).